Consider the following 436-residue polypeptide: MQVSVENTTALERRLSITVPAERIETAVNKRLQQTAQKAKIAGFRPGKVPMSEIKRRFGADARQEAVGDVIQASFYEAVVEQKLNPAGSPSIEPKSLEAGKDLEYVAVFEVFPEFEVAGFDGIAIERLSAEVADSDLDNMLEILRKQNTRFEVAERAAQNEDQLNIDFVGKVDGEAFAGGSAKGTQLVLGSNRMIPGFEDGLVGAKAGEERVLNLEFPADYQNLDLAGKAAEFTVTVNSVSEPKLPELNEEFFAQFGIKETGIEGFRTEVRKNMERELRQAIKSKVKNQVMDGLLAANPIEVPKALLSNEVDRLRVQAVQQFGGNIKPDQLPAELFEEQAKRRVVLGLIVAEVVKQFDLKPDEDRVREMIQEMASAYQEPEQVVAWYYKNDQQLNEVRSVVLEEQVVDTVLQKAKVTDKAVSYEEAVKPAEAAQAD.

Positions E161–P246 constitute a PPIase FKBP-type domain.

This sequence belongs to the FKBP-type PPIase family. Tig subfamily.

It localises to the cytoplasm. The catalysed reaction is [protein]-peptidylproline (omega=180) = [protein]-peptidylproline (omega=0). Involved in protein export. Acts as a chaperone by maintaining the newly synthesized protein in an open conformation. Functions as a peptidyl-prolyl cis-trans isomerase. The sequence is that of Trigger factor from Pseudomonas fluorescens (strain SBW25).